A 258-amino-acid chain; its full sequence is Imidazole glycerol phosphate synthase subunit HisF (258 aa).

Residues Asp11 and Asp130 contribute to the active site.

Belongs to the HisA/HisF family. In terms of assembly, heterodimer of HisH and HisF.

It localises to the cytoplasm. The catalysed reaction is 5-[(5-phospho-1-deoxy-D-ribulos-1-ylimino)methylamino]-1-(5-phospho-beta-D-ribosyl)imidazole-4-carboxamide + L-glutamine = D-erythro-1-(imidazol-4-yl)glycerol 3-phosphate + 5-amino-1-(5-phospho-beta-D-ribosyl)imidazole-4-carboxamide + L-glutamate + H(+). The protein operates within amino-acid biosynthesis; L-histidine biosynthesis; L-histidine from 5-phospho-alpha-D-ribose 1-diphosphate: step 5/9. Functionally, IGPS catalyzes the conversion of PRFAR and glutamine to IGP, AICAR and glutamate. The HisF subunit catalyzes the cyclization activity that produces IGP and AICAR from PRFAR using the ammonia provided by the HisH subunit. The chain is Imidazole glycerol phosphate synthase subunit HisF from Magnetococcus marinus (strain ATCC BAA-1437 / JCM 17883 / MC-1).